Here is a 154-residue protein sequence, read N- to C-terminus: 6,7-dimethyl-8-ribityllumazine synthase (154 aa).

5-amino-6-(D-ribitylamino)uracil-binding positions include F26, 60 to 62 (ALE), and 84 to 86 (CII). 89–90 (ET) contributes to the (2S)-2-hydroxy-3-oxobutyl phosphate binding site. H92 functions as the Proton donor in the catalytic mechanism. Residue N117 coordinates 5-amino-6-(D-ribitylamino)uracil. R131 contacts (2S)-2-hydroxy-3-oxobutyl phosphate.

Belongs to the DMRL synthase family.

It catalyses the reaction (2S)-2-hydroxy-3-oxobutyl phosphate + 5-amino-6-(D-ribitylamino)uracil = 6,7-dimethyl-8-(1-D-ribityl)lumazine + phosphate + 2 H2O + H(+). It participates in cofactor biosynthesis; riboflavin biosynthesis; riboflavin from 2-hydroxy-3-oxobutyl phosphate and 5-amino-6-(D-ribitylamino)uracil: step 1/2. In terms of biological role, catalyzes the formation of 6,7-dimethyl-8-ribityllumazine by condensation of 5-amino-6-(D-ribitylamino)uracil with 3,4-dihydroxy-2-butanone 4-phosphate. This is the penultimate step in the biosynthesis of riboflavin. The sequence is that of 6,7-dimethyl-8-ribityllumazine synthase from Acidovorax sp. (strain JS42).